Here is a 222-residue protein sequence, read N- to C-terminus: Cell division protein FtsQ (222 aa).

Residues 1–5 (MNKKV) lie on the Cytoplasmic side of the membrane. Residues 6 to 26 (IAIVVGVVVVLVAILGVVAWF) traverse the membrane as a helical segment. The Extracellular segment spans residues 27 to 222 (VPILKVGNIE…ISSPSMVTVR (196 aa)). The 69-residue stretch at 30 to 98 (LKVGNIEVTG…STITVELTER (69 aa)) folds into the POTRA domain.

It belongs to the FtsQ/DivIB family. FtsQ subfamily.

It localises to the cell membrane. In terms of biological role, essential cell division protein. This is Cell division protein FtsQ from Corynebacterium glutamicum (strain ATCC 13032 / DSM 20300 / JCM 1318 / BCRC 11384 / CCUG 27702 / LMG 3730 / NBRC 12168 / NCIMB 10025 / NRRL B-2784 / 534).